Here is a 148-residue protein sequence, read N- to C-terminus: Small ribosomal subunit protein bS6 (148 aa).

Residues 97–148 (EEGPSAMLQRRDDRERGDRGDRGPRRDFDDRGPRRPREDDRPRRSREDEGDE) form a disordered region.

The protein belongs to the bacterial ribosomal protein bS6 family.

Binds together with bS18 to 16S ribosomal RNA. This chain is Small ribosomal subunit protein bS6, found in Chelativorans sp. (strain BNC1).